Here is a 602-residue protein sequence, read N- to C-terminus: MKTKAPMKNIRNFSIIAHIDHGKSTLADCLISECNAISNREMKSQVMDTMDIEKERGITIKAQSVRLNYTFKGEDYVLNLIDTPGHVDFSYEVSRSLCSCEGALLVVDATQGVEAQTIANTYIALDNHLEILPVINKIDLPNANVLEVKQDIEDTIGIDCSNANEVSAKAKLGIKDLLEKIITTIPAPSGDPNAPLKALIYDSWFDNYLGALALVRIMDGSINTEQEILVMGTGKKHGVLGLYYPNPLKKIPTKSLECGEIGIVSLGLKSVTDIAVGDTLTDAKNPTSKPIEGFMPAKPFVFAGLYPIETDRFEDLREALLKLQLNDCALNFEPESSVALGFGFRVGFLGLLHMEVIKERLEREFGLNLIATAPTVVYEVHLTDNSIKYVQNPSELPPENHIACIKEPFVRATIITPSEFLGNLMQLLNNKRGIQEKMEYLNQSRVMLTYSLPSNEIVMDFYDKLKSCTKGYASFDYEPIENREAHLVKLDVRVAGDVVDALSIIIDKNKAYEKGRALVETMKELIPRQLFEVAIQASVGNKIIARETIKSVGKNVTAKCYGGDITRKRKLLEKQKEGKKRMKAIGKVELPQEAFLAILKID.

The tr-type G domain occupies 8-189 (KNIRNFSIIA…KIITTIPAPS (182 aa)). GTP contacts are provided by residues 20–25 (DHGKST) and 136–139 (NKID).

This sequence belongs to the TRAFAC class translation factor GTPase superfamily. Classic translation factor GTPase family. LepA subfamily.

It is found in the cell inner membrane. It catalyses the reaction GTP + H2O = GDP + phosphate + H(+). Its function is as follows. Required for accurate and efficient protein synthesis under certain stress conditions. May act as a fidelity factor of the translation reaction, by catalyzing a one-codon backward translocation of tRNAs on improperly translocated ribosomes. Back-translocation proceeds from a post-translocation (POST) complex to a pre-translocation (PRE) complex, thus giving elongation factor G a second chance to translocate the tRNAs correctly. Binds to ribosomes in a GTP-dependent manner. The polypeptide is Elongation factor 4 (Helicobacter pylori (strain HPAG1)).